We begin with the raw amino-acid sequence, 233 residues long: Large ribosomal subunit protein uL1 (233 aa).

It belongs to the universal ribosomal protein uL1 family. Part of the 50S ribosomal subunit.

Binds directly to 23S rRNA. The L1 stalk is quite mobile in the ribosome, and is involved in E site tRNA release. Its function is as follows. Protein L1 is also a translational repressor protein, it controls the translation of the L11 operon by binding to its mRNA. In Shewanella halifaxensis (strain HAW-EB4), this protein is Large ribosomal subunit protein uL1.